The sequence spans 452 residues: Zinc finger protein GAI-ASSOCIATED FACTOR 1 (452 aa).

Residues 1 to 32 (MPVDLDNSSTVSGEASVSISSTGNQNPLPNST) are compositionally biased toward polar residues. Residues 1–47 (MPVDLDNSSTVSGEASVSISSTGNQNPLPNSTGKKKRNLPGMPDPES) form a disordered region. The residue at position 53 (S53) is a Phosphoserine. C2H2-type zinc fingers lie at residues 63 to 85 (FVCE…RRGH) and 104 to 134 (YVCP…CRKH). Positions 126–133 (IKKHFCRK) match the Nuclear localization signal motif. Residues 139-162 (WKCDKCSKKYAVQSDWKAHSKICG) form a C2H2-type 2; degenerate zinc finger. Residues C141, C144, H157, C161, C168, C170, H183, and C187 each contribute to the Zn(2+) site. The CCHC-type 2; atypical zinc-finger motif lies at 166 to 189 (YKCDCGTLFSRRDSFITHRAFCDA). The tract at residues 176 to 188 (RRDSFITHRAFCD) is SHR-binding. The interval 196–254 (RSHHSQSKKQNPEILTRKNPVPNPVPAPVDTESAKIKSSSTLTIKQSESPKTPPEIVQE) is disordered. The segment covering 231 to 245 (IKSSSTLTIKQSESP) has biased composition (polar residues).

Interacts with the DELLA proteins (e.g. GAI/RGA2, RGA, RGL1, RGL2 and RGLG3), acting as coactivators and with TPR1 and TPR4, acting as a corepressors, at the promoter of GA20OX2 gene. As to expression, observed in vegetative tissues. Mainly expressed in hypocotyls, petioles, shoot apices, root tips, and trichomes, and, at low levels, in leaves, stems and flowers.

It localises to the nucleus. Transcription activation is repressed by gibberellic acid GA(3) in the presence of TPR4. In terms of biological role, transcription factor that acts as a positive regulator of gibberellin (GA) action, homeostasis and signaling. GA converts the GAF1 complex from transcriptional activator to repressor via the degradation of DELLA proteins. This chain is Zinc finger protein GAI-ASSOCIATED FACTOR 1, found in Arabidopsis thaliana (Mouse-ear cress).